Reading from the N-terminus, the 384-residue chain is 8-amino-7-oxononanoate synthase (384 aa).

Arg21 serves as a coordination point for substrate. 108–109 serves as a coordination point for pyridoxal 5'-phosphate; that stretch reads GF. His133 provides a ligand contact to substrate. Residues Ser179, His207, and Thr233 each coordinate pyridoxal 5'-phosphate. Lys236 bears the N6-(pyridoxal phosphate)lysine mark. Residue Thr352 coordinates substrate.

Belongs to the class-II pyridoxal-phosphate-dependent aminotransferase family. BioF subfamily. In terms of assembly, homodimer. Pyridoxal 5'-phosphate is required as a cofactor.

It catalyses the reaction 6-carboxyhexanoyl-[ACP] + L-alanine + H(+) = (8S)-8-amino-7-oxononanoate + holo-[ACP] + CO2. It participates in cofactor biosynthesis; biotin biosynthesis. Catalyzes the decarboxylative condensation of pimeloyl-[acyl-carrier protein] and L-alanine to produce 8-amino-7-oxononanoate (AON), [acyl-carrier protein], and carbon dioxide. The polypeptide is 8-amino-7-oxononanoate synthase (Shigella flexneri serotype 5b (strain 8401)).